A 232-amino-acid polypeptide reads, in one-letter code: 7-cyano-7-deazaguanine synthase (232 aa).

ATP is bound at residue 7 to 17 (CSGGLDSVSLA). Residues C185, C193, C196, and C199 each contribute to the Zn(2+) site.

Belongs to the QueC family. Requires Zn(2+) as cofactor.

It carries out the reaction 7-carboxy-7-deazaguanine + NH4(+) + ATP = 7-cyano-7-deazaguanine + ADP + phosphate + H2O + H(+). The protein operates within purine metabolism; 7-cyano-7-deazaguanine biosynthesis. Catalyzes the ATP-dependent conversion of 7-carboxy-7-deazaguanine (CDG) to 7-cyano-7-deazaguanine (preQ(0)). The protein is 7-cyano-7-deazaguanine synthase of Brucella abortus (strain S19).